Reading from the N-terminus, the 420-residue chain is MMQVPGDVQIIKEDNVTHSFCGLACVGWMYQKIKDSFFLILGTHTCAHFLQNALGMMIFAKPRFGIALIEEGDLSKHEPTLEEIISEIKADHNPSVIFLLSSCTPEVMKVDFKGLANQLSTDEVPVLFVPASGLVYNFTQAEDSVLHALVPFCPVAPAGQKNVVFLGSVNDATADDLRAEAEALGIPVGGFLPESRFDKMPAIGPDTVLAPVQPYLSRVAVKLERERGARVLHSLFPFGPDGTRVFWEDLAREFGITVDLRDREKAAWDKIQKQTALLRGKKVFLTADTMMELPLARFLKNAGAEVVECSSAYINKKFHAHELEALQGVRVVEQPNFHRQLEDVTRIQPDLIITSLMTANPFAGHGFVVKWSMEFMLMPIHSWSGVIPLANLFVSPLQRRSKLPAFDKDVWIEGVMPSAE.

Residues Cys-21, Cys-46, and Cys-103 each contribute to the [4Fe-4S] cluster site.

The protein belongs to the BchN/ChlN family. Protochlorophyllide reductase is composed of three subunits; BchL, BchN and BchB. Forms a heterotetramer of two BchB and two BchN subunits. [4Fe-4S] cluster is required as a cofactor.

It carries out the reaction chlorophyllide a + oxidized 2[4Fe-4S]-[ferredoxin] + 2 ADP + 2 phosphate = protochlorophyllide a + reduced 2[4Fe-4S]-[ferredoxin] + 2 ATP + 2 H2O. Its pathway is porphyrin-containing compound metabolism; bacteriochlorophyll biosynthesis (light-independent). In terms of biological role, component of the dark-operative protochlorophyllide reductase (DPOR) that uses Mg-ATP and reduced ferredoxin to reduce ring D of protochlorophyllide (Pchlide) to form chlorophyllide a (Chlide). This reaction is light-independent. The NB-protein (BchN-BchB) is the catalytic component of the complex. The polypeptide is Light-independent protochlorophyllide reductase subunit N (Chlorobium phaeobacteroides (strain DSM 266 / SMG 266 / 2430)).